Consider the following 223-residue polypeptide: Triosephosphate isomerase (223 aa).

6 to 8 is a binding site for substrate; sequence NLK. His-86 serves as the catalytic Electrophile. The active-site Proton acceptor is the Glu-151. Residues Gly-157 and Ser-187 each contribute to the substrate site.

This sequence belongs to the triosephosphate isomerase family. Homodimer.

It localises to the cytoplasm. The catalysed reaction is D-glyceraldehyde 3-phosphate = dihydroxyacetone phosphate. Its pathway is carbohydrate biosynthesis; gluconeogenesis. It participates in carbohydrate degradation; glycolysis; D-glyceraldehyde 3-phosphate from glycerone phosphate: step 1/1. Its function is as follows. Involved in the gluconeogenesis. Catalyzes stereospecifically the conversion of dihydroxyacetone phosphate (DHAP) to D-glyceraldehyde-3-phosphate (G3P). In Campylobacter jejuni subsp. jejuni serotype O:2 (strain ATCC 700819 / NCTC 11168), this protein is Triosephosphate isomerase.